The primary structure comprises 258 residues: MVSTENKIGLFKNKDDDIDGEEMRELPQKKFYRQRAHANPISDHEFDYPVFPEQMDWKKYFGDFSEGRQVEFADVGCGYGGLLIKLSTLYPEALMVGLEIRVKVSDYVQDKIHALRLREPGNYRNVACLRTNAMKYLPNYFRRHQLTKMFFLYPDPHFKKAKHKWRIITPTLLAEYAYVLKPGGLVYTITDVEELHIWMVRHLSAHPLFERLTDLEMKMDPVVEMLYDSTEEGQKVARNEGSKWSAVFRRLPNPVLSS.

S-adenosyl-L-methionine is bound by residues Gly-76, 99–100, 132–133, and Leu-152; these read EI and NA. Asp-155 is a catalytic residue. 230 to 232 provides a ligand contact to S-adenosyl-L-methionine; sequence TEE.

The protein belongs to the class I-like SAM-binding methyltransferase superfamily. TrmB family.

It localises to the nucleus. The catalysed reaction is guanosine(46) in tRNA + S-adenosyl-L-methionine = N(7)-methylguanosine(46) in tRNA + S-adenosyl-L-homocysteine. Its pathway is tRNA modification; N(7)-methylguanine-tRNA biosynthesis. Catalyzes the formation of N(7)-methylguanine at position 46 (m7G46) in tRNA. This chain is tRNA (guanine-N(7)-)-methyltransferase, found in Brugia malayi (Filarial nematode worm).